The chain runs to 182 residues: Regulatory protein RecX (182 aa).

The disordered stretch occupies residues 12-54 (LSQRDHSESELRRKLAAPPFSAKGNWGKRSGAKSSNLVESNPV). The span at 13-24 (SQRDHSESELRR) shows a compositional bias: basic and acidic residues. The span at 43 to 54 (AKSSNLVESNPV) shows a compositional bias: polar residues.

The protein belongs to the RecX family.

The protein localises to the cytoplasm. Its function is as follows. Modulates RecA activity. In Yersinia pseudotuberculosis serotype I (strain IP32953), this protein is Regulatory protein RecX.